The following is a 648-amino-acid chain: Probable potassium transport system protein Kup 1 (648 aa).

A disordered region spans residues 1 to 31 (MSDAVTDADGSSAQSHAQSAGHHAVQGHGGH). The segment covering 10 to 26 (GSSAQSHAQSAGHHAVQ) has biased composition (low complexity). The next 12 membrane-spanning stretches (helical) occupy residues 39 to 59 (LAVG…LYAL), 73 to 93 (LLHI…IVTF), 130 to 150 (IILL…ITPA), 165 to 185 (PDMH…LFFI), 193 to 213 (VAAF…VLGA), 243 to 263 (FLAM…YADM), 275 to 295 (WLVF…SLLI), 317 to 337 (LLFI…SGAF), 364 to 384 (IFIP…VLVF), 394 to 414 (YGIA…VVLF), 421 to 441 (APAA…YLGA), and 446 to 466 (IPDG…LLTT).

Belongs to the HAK/KUP transporter (TC 2.A.72) family.

It is found in the cell inner membrane. The catalysed reaction is K(+)(in) + H(+)(in) = K(+)(out) + H(+)(out). In terms of biological role, transport of potassium into the cell. Likely operates as a K(+):H(+) symporter. The sequence is that of Probable potassium transport system protein Kup 1 from Novosphingobium aromaticivorans (strain ATCC 700278 / DSM 12444 / CCUG 56034 / CIP 105152 / NBRC 16084 / F199).